We begin with the raw amino-acid sequence, 124 residues long: UPF0357 protein C1687.07 (124 aa).

The N-terminal stretch at 1-24 is a signal peptide; it reads MASFHIIVSYVTVVLAIIIAITFA.

Belongs to the UPF0357 family.

In Schizosaccharomyces pombe (strain 972 / ATCC 24843) (Fission yeast), this protein is UPF0357 protein C1687.07.